The sequence spans 445 residues: tRNA(Ile)-lysidine synthase (445 aa).

38–43 provides a ligand contact to ATP; that stretch reads SGGLDS.

The protein belongs to the tRNA(Ile)-lysidine synthase family.

It is found in the cytoplasm. The catalysed reaction is cytidine(34) in tRNA(Ile2) + L-lysine + ATP = lysidine(34) in tRNA(Ile2) + AMP + diphosphate + H(+). Functionally, ligates lysine onto the cytidine present at position 34 of the AUA codon-specific tRNA(Ile) that contains the anticodon CAU, in an ATP-dependent manner. Cytidine is converted to lysidine, thus changing the amino acid specificity of the tRNA from methionine to isoleucine. The protein is tRNA(Ile)-lysidine synthase of Neisseria gonorrhoeae (strain ATCC 700825 / FA 1090).